We begin with the raw amino-acid sequence, 800 residues long: Nucleolar complex protein 3 homolog (800 aa).

The segment at 37–90 (STIKKYRKEQRKLRQAVKDAVSKKPFPLEDPKSKRPVKGMEREEEDEEDQALPL) is disordered. Positions 40–51 (KKYRKEQRKLRQ) are enriched in basic residues. The span at 52 to 77 (AVKDAVSKKPFPLEDPKSKRPVKGME) shows a compositional bias: basic and acidic residues. The span at 78-90 (REEEDEEDQALPL) shows a compositional bias: acidic residues. K333 participates in a covalent cross-link: Glycyl lysine isopeptide (Lys-Gly) (interchain with G-Cter in SUMO2). Residues 450 to 489 (FKEKRKTLSRMQRKWKKAEEKLERELREAEASESTERKLK) are a coiled coil.

The protein belongs to the CBF/MAK21 family.

It localises to the nucleus. Its subcellular location is the nucleolus. In Cricetulus griseus (Chinese hamster), this protein is Nucleolar complex protein 3 homolog (NOC3L).